The following is a 2131-amino-acid chain: Beta/gamma crystallin domain-containing protein 1 (2131 aa).

Disordered regions lie at residues 1-53 (MPLS…LPAP), 104-370 (KSRA…KGHA), 385-674 (TEGA…PVHK), 688-707 (RTNS…TPAS), and 723-743 (AKEM…NGVL). The span at 19–35 (PPKKHTTFHLWRSKKKQ) shows a compositional bias: basic residues. A compositionally biased stretch (polar residues) spans 135-147 (RNGLESPTRSNAK). Basic and acidic residues-rich tracts occupy residues 160 to 169 (LPERESERSR) and 184 to 194 (GSPRENPREAE). The span at 248-265 (ATTTAKQLHSSPGNSSRQ) shows a compositional bias: polar residues. The segment covering 414-424 (SGRRSGRRRGS) has biased composition (basic residues). Residues 479–490 (ASAASPESKPSP) show a composition bias toward low complexity. 2 positions are modified to phosphoserine: Ser-483 and Ser-489. Basic and acidic residues-rich tracts occupy residues 536–546 (PAKESPPKRVP) and 562–572 (EAARAIPRELP). Over residues 609–619 (RAAGAPGASDA) the composition is skewed to low complexity. A compositionally biased stretch (basic and acidic residues) spans 723–733 (AKEMEQPEKKV). Ser-737 and Ser-756 each carry phosphoserine. Disordered regions lie at residues 758–791 (EEIL…DVQT) and 837–889 (DIPT…KDTC). Residues 769–782 (GDSSENQALGPQPN) show a composition bias toward polar residues. Over residues 864-881 (SPAESSPGPSLSLSAPAP) the composition is skewed to low complexity. Position 892 is a phosphoserine (Ser-892). Disordered regions lie at residues 926–947 (LELG…AVGS), 1041–1101 (QAQS…VFDS), 1271–1302 (STSQ…EQSN), and 1316–1348 (SSST…SRSN). Thr-933 is subject to Phosphothreonine. Over residues 1055-1089 (SSPTNSPSSGNHLATPQRPDQTVTNGQDSPASLLN) the composition is skewed to polar residues. 3 stretches are compositionally biased toward low complexity: residues 1091 to 1101 (SAGSDDSVFDS), 1271 to 1288 (STSQ…QPTT), and 1316 to 1327 (SSSTSHSSLKSP). The span at 1328 to 1348 (SHMEKYPQKEKTKEDLDSRSN) shows a compositional bias: basic and acidic residues. Beta/gamma crystallin 'Greek key' domains follow at residues 1430–1469 (GKVV…KVVR), 1470–1525 (GCWI…RHVV), 1531–1571 (SHID…KVHW), 1572–1614 (GTWL…RPLK), 1626–1678 (PKVV…KVLR), 1679–1721 (GIWV…RPIL), 1727–1769 (AHMI…NVLS), 1770–1812 (GVWV…QPIC), 1823–1860 (NQIH…RVSG), 1861–1904 (GSWV…RFID), 1910–1950 (PTII…QVIG), and 1951–1992 (GIWV…RPFV). Positions 1994 to 2127 (KRIYFRLRNK…EKFTQVWEAM (134 aa)) constitute a Ricin B-type lectin domain.

Belongs to the beta/gamma-crystallin family.

Its function is as follows. May function as suppressor of malignant melanoma. It may exert its effects through interactions with the cytoskeleton. This Homo sapiens (Human) protein is Beta/gamma crystallin domain-containing protein 1.